Consider the following 1483-residue polypeptide: MIVRSLLLAGSLLLASVVPAAHAKSDGPEIKVKEFDKVPTNPYYFEDTDTVMLSGHMAELFISTDAASTWEPLKDKDGLLFPNRYHSQSAVIYGPNRKHWATFDAAKTWREFEVPEKLIFSNEGPRPFTFHGKDPNKVIINAEECLISLCRRVTYYTTDGFKTIKKLLKNDMGCYWAVGTPVFAEGQKDLPEKLDDRIFCIWAHITPFDRTRRLIYSDTYFSDDKFRAVEIGGREIKGVNNIALIKKYLVLAASSEGTSEAAIYVSKDAVNWGRAEFYGGPKIRGGSFTVLESTNYSIQVNAASRRSRRPIGSLFTSDSAGTSFTMNVDGVNEDEKMYTDFEQVSGIQGIFLINLVDNAADVKSGQSSEKKIVSRISFDDGRTFKPLKCGDKDLHLHSITRPSNMGRIFSSPAPGLIMGVGNTGDKLKEYENGNLYVSNDAGVTWRKALDKSHKYEFGDQGSLLVAIADDGKDELLTDEISYSLNHGKDWKKAKLPHKAAAIWLTTTPDSTSLQFLLIAQGKGKSYAMSIDFSNVHERKCEEKDFERWPARLDEKGEPDCLMGHKQFYRRRKADADCFVKEKFKEPVPETEACKCTKEDFECSAGFRRNKDYDCEPDGKLKPADGKCKNPDDKFMGPSGYRMIPGDDCIKKGGVDLEKEVERPCKDVTKAPASGQIAVEKTTFETKNLNYRYLERSDTSSGDDETVILRTDDGNLFVTRDHGKTWQRGKFQEPILQYIPHKYDHDVVYLLTQGKKAYWSIDRAHSFHSFEGKLPVTRTKGTLPLFFHPDHPDWLIWIGGENCNGQKCTDLAYYSKNRGDEWDLLLRGVGKCMFAGKKDELTADDLIFCSQHEHEDPRKNLRLVSSVDQFAKTTSIHFDGKPIVGYAKMSEFIVAATKNGTELQSFTSVDGKTFAHAAFPPNYHVGAEYAYTVLDSSTHSIFLHVTDHSAQNNEFGSILKSNSNGTSYVMSLRDANRNKADYVDFEKIQVVEGVAMANIVANADEVRHKGQDKKFRSMISHNDASEWALMPPPKKDVEGHSFDCKVKDKGTEECALHIHGYTERRDSRDSMSSGSAVGLIIGVGNVGPYLTTRAESDTFMSRDAGITWHQVRKGRYQWEFGDQGSIVVIVAEEKPTKVLSYSLDEGETWTDFEFTDKEVKVEDISTVPSDTSRNFLLWARGGSPGELIAYNVDFTGLKEREKQCVLKKESPEADDYYLWSPKHPQQKSNCLFGHVSVYHRKRPEAKCYNGPKLDRLSSEKKNCECTRQDYECDYNYERQSDGSCALVKGLQPADPMKICKDDPEAVEYFEPTGYRKLPVSTCEGGHQLDHIVARPCPNKKKEFEKKHPGIGGFGIFLAIFFPVTAATAIGYWAFSKWDGKFGRIRLGESQPESLFAGNSPLITIPVAIVAGTVAVITALPLLFSSLWRSFKGYTRLSNPWGQRQRPYASRDAFAARRGEYVGVVDDEDELLGAEEFEGDDDEEV.

The first 23 residues, 1–23 (MIVRSLLLAGSLLLASVVPAAHA), serve as a signal peptide directing secretion. Residues 24–1347 (KSDGPEIKVK…KKKEFEKKHP (1324 aa)) are Lumenal-facing. The N-linked (GlcNAc...) asparagine glycan is linked to asparagine 295. BNR repeat units follow at residues 376–385 (ISFDDGRTFK), 436–446 (YVSNDAGVTWR), 482–492 (YSLNHGKDWKK), and 716–726 (FVTRDHGKTWQ). N-linked (GlcNAc...) asparagine glycans are attached at residues asparagine 898 and asparagine 963. 2 BNR repeats span residues 1098 to 1108 (FMSRDAGITWH) and 1140 to 1149 (YSLDEGETWT). Residues 1348 to 1368 (GIGGFGIFLAIFFPVTAATAI) traverse the membrane as a helical segment. Residues 1369–1399 (GYWAFSKWDGKFGRIRLGESQPESLFAGNSP) lie on the Cytoplasmic side of the membrane. The helical transmembrane segment at 1400–1420 (LITIPVAIVAGTVAVITALPL) threads the bilayer. The Lumenal segment spans residues 1421 to 1483 (LFSSLWRSFK…EFEGDDDEEV (63 aa)).

The protein belongs to the VPS10-related sortilin family.

Its subcellular location is the golgi apparatus. The protein resides in the trans-Golgi network membrane. It is found in the prevacuolar compartment membrane. Functions as a sorting receptor in the Golgi compartment required for the intracellular sorting and delivery of soluble vacuolar proteins, like carboxypeptidase Y (CPY) and proteinase A. Executes multiple rounds of sorting by cycling between the late Golgi and a prevacuolar endosome-like compartment. The polypeptide is Vacuolar protein sorting/targeting protein 10 (VPS10) (Arthroderma gypseum (strain ATCC MYA-4604 / CBS 118893) (Microsporum gypseum)).